Here is a 165-residue protein sequence, read N- to C-terminus: Transmembrane protein 128 (165 aa).

Transmembrane regions (helical) follow at residues 49–69, 81–101, 119–139, and 144–164; these read NIHS…VDFF, WFLC…YCIV, LIPI…IALW, and FFTP…ITLL.

The protein resides in the membrane. In Homo sapiens (Human), this protein is Transmembrane protein 128 (TMEM128).